Consider the following 305-residue polypeptide: Sulfate adenylyltransferase subunit 2 (305 aa).

Belongs to the PAPS reductase family. CysD subfamily. Heterodimer composed of CysD, the smaller subunit, and CysN.

The enzyme catalyses sulfate + ATP + H(+) = adenosine 5'-phosphosulfate + diphosphate. It functions in the pathway sulfur metabolism; hydrogen sulfide biosynthesis; sulfite from sulfate: step 1/3. In terms of biological role, with CysN forms the ATP sulfurylase (ATPS) that catalyzes the adenylation of sulfate producing adenosine 5'-phosphosulfate (APS) and diphosphate, the first enzymatic step in sulfur assimilation pathway. APS synthesis involves the formation of a high-energy phosphoric-sulfuric acid anhydride bond driven by GTP hydrolysis by CysN coupled to ATP hydrolysis by CysD. The sequence is that of Sulfate adenylyltransferase subunit 2 from Stutzerimonas stutzeri (strain A1501) (Pseudomonas stutzeri).